Consider the following 212-residue polypeptide: Regulatory protein RecX (212 aa).

Belongs to the RecX family.

Its subcellular location is the cytoplasm. In terms of biological role, modulates RecA activity. This is Regulatory protein RecX from Clostridium botulinum (strain Alaska E43 / Type E3).